The primary structure comprises 115 residues: MARVKRGVIARARHKKVLKQAKGYYGARSRVYRVAKQAVIKAGQYAYRDRRQRKRQFRALWITRINAGAREFGLSYSRFISGLKKASIEIDRKVLADLAVRDKDAFAELARIAQG.

Belongs to the bacterial ribosomal protein bL20 family.

Its function is as follows. Binds directly to 23S ribosomal RNA and is necessary for the in vitro assembly process of the 50S ribosomal subunit. It is not involved in the protein synthesizing functions of that subunit. The sequence is that of Large ribosomal subunit protein bL20 from Methylococcus capsulatus (strain ATCC 33009 / NCIMB 11132 / Bath).